Reading from the N-terminus, the 798-residue chain is Integrin beta-1 (798 aa).

Residues 1 to 20 (MNLQLIFWIGLISSVCCVFG) form the signal peptide. At 21–728 (QADENRCLKA…ETPECPTGPD (708 aa)) the chain is on the extracellular side. The PSI domain occupies 26–76 (RCLKANAKSCGECIQAGPNCGWCTNSTFLQEGMPTSARCDDLEALKKKGCH). 28 cysteine pairs are disulfide-bonded: Cys-27–Cys-45, Cys-35–Cys-464, Cys-38–Cys-64, Cys-48–Cys-75, Cys-207–Cys-213, Cys-261–Cys-301, Cys-401–Cys-415, Cys-435–Cys-462, Cys-466–Cys-486, Cys-477–Cys-489, Cys-491–Cys-500, Cys-502–Cys-533, Cys-516–Cys-531, Cys-525–Cys-536, Cys-538–Cys-553, Cys-555–Cys-576, Cys-560–Cys-574, Cys-568–Cys-579, Cys-581–Cys-590, Cys-592–Cys-615, Cys-599–Cys-613, Cys-607–Cys-618, Cys-620–Cys-630, Cys-633–Cys-636, Cys-640–Cys-691, Cys-646–Cys-665, Cys-649–Cys-661, and Cys-699–Cys-723. Asn-50 carries N-linked (GlcNAc...) asparagine glycosylation. The span at 75-91 (CHPNDIENPRGSKDIKK) shows a compositional bias: basic and acidic residues. A disordered region spans residues 75-105 (CHPNDIENPRGSKDIKKNKNVTNRSKGTAEK). N-linked (GlcNAc...) asparagine glycans are attached at residues Asn-94 and Asn-97. In terms of domain architecture, VWFA spans 140–378 (DYPIDLYYLM…QLIIDAYNSL (239 aa)). Mg(2+)-binding residues include Ser-152 and Ser-154. Ser-154, Asp-157, Asp-158, and Glu-189 together coordinate Ca(2+). The CX3CL1-binding stretch occupies residues 207 to 213 (CTNEQNC). Residue Asn-212 is glycosylated (N-linked (GlcNAc...) asparagine). Residues Asn-244, Asp-246, Pro-248, and Glu-249 each coordinate Ca(2+). Glu-249 serves as a coordination point for Mg(2+). N-linked (GlcNAc...) asparagine glycosylation occurs at Asn-269. The tract at residues 295-314 (LPNDGQCHLENDVYTMSHYY) is CX3CL1-binding. Ala-362 is a binding site for Ca(2+). N-linked (GlcNAc...) asparagine glycans are attached at residues Asn-363, Asn-406, and Asn-417. The tract at residues 383-465 (ILENSKLPEG…IILQFICECE (83 aa)) is interaction with TMEM182. I-EGF domains are found at residues 466-501 (CQGE…RHCE), 502-554 (CSTD…KFCE), 555-591 (CDNF…SACD), and 592-631 (CSLD…PTCE). Residue Asn-481 is glycosylated (N-linked (GlcNAc...) asparagine). Asn-520 carries N-linked (GlcNAc...) asparagine glycosylation. Asn-584 is a glycosylation site (N-linked (GlcNAc...) asparagine). Residue Asn-669 is glycosylated (N-linked (GlcNAc...) asparagine). Residues 729 to 749 (IIPIVAGVVAGIVLIGLALLL) form a helical membrane-spanning segment. Topologically, residues 750–798 (IWKLLMIIHDRREFAKFEKEKMNAKWDTGENPIYKSAVTTVVNPKYEGK) are cytoplasmic. The tract at residues 762 to 767 (EFAKFE) is signal for sorting from recycling endosomes; interaction with ACAP1. A Phosphothreonine modification is found at Thr-777. Position 783 is a phosphotyrosine (Tyr-783). The residue at position 785 (Ser-785) is a Phosphoserine. Positions 785-792 (SAVTTVVN) are interaction with ITGB1BP1. The residue at position 789 (Thr-789) is a Phosphothreonine. At Lys-794 the chain carries N6-acetyllysine; alternate. Residue Lys-794 forms a Glycyl lysine isopeptide (Lys-Gly) (interchain with G-Cter in SUMO1); alternate linkage.

It belongs to the integrin beta chain family. As to quaternary structure, interacts with seprase FAP (seprase); the interaction occurs at the cell surface of invadopodia membrane in a collagen-dependent manner. Heterodimer of an alpha and a beta subunit. Beta-1 associates with either alpha-1, alpha-2, alpha-3, alpha-4, alpha-5, alpha-6, alpha-7, alpha-8, alpha-9, alpha-10, alpha-11 or alpha-V. ITGA6:ITGB1 is found in a complex with CD9; interaction takes place in oocytes and is involved in sperm-egg fusion. Binds LGALS3BP and NMRK2, when associated with alpha-7, but not with alpha-5. Interacts with FLNB, FLNC and RANBP9. Interacts with KRT1 in the presence of RACK1 and SRC. Interacts with JAML; integrin alpha-4/beta-1 may regulate leukocyte to endothelial cells adhesion by controlling JAML homodimerization. Interacts with RAB21. Interacts (via the cytoplasmic region) with RAB25 (via the hypervariable C-terminal region). Interacts with MYO10. Interacts with ITGB1BP1 (via C-terminal region); the interaction is a prerequisite for focal adhesion disassembly. Interacts with TLN1; the interaction is prevented by competitive binding of ITGB1BP1. Interacts with ACAP1; required for ITGB1 recycling. Interacts with ASAP3. Interacts with FERMT2; the interaction is inhibited in presence of ITGB1BP1. Interacts with DAB2. Interacts with FGR and HCK. Interacts with EMP2; the interaction may be direct or indirect and ITGB1 has a heterodimer form. ITGA5:ITGB1 interacts with CCN3. ITGA4:ITGB1 is found in a ternary complex with CX3CR1 and CX3CL1. ITGA5:ITGB1 interacts with FBN1. ITGA5:ITGB1 interacts with IL1B. Interacts with MDK. ITGA4:ITGB1 interacts with MDK; this interaction mediates MDK-induced osteoblast cells migration through PXN phosphorylation. ITGA6:ITGB1 interacts with MDK; this interaction mediates MDK-induced neurite-outgrowth. ITGA5:ITGB1 interacts with ACE2. Interacts with TMEM182 and LAMB1. Interacts with tensin TNS3; TNS3 also interacts with PEAK1, thus acting as an adapter molecule to bridge the association of PEAK1 with ITGB1. Interacts with tensin TNS4; the interaction displaces tensin TNS3 from the ITGB1 cytoplasmic tail and promotes ITGB1 stability. Integrin ITGA9:ITGB1 interacts with SPP1/OPN (via N-terminus). Integrin ITGA9:ITGB1 interacts with TNC/TNFN3 (via the 3rd Fibronectin type-III domain). Integrins ITGA4:ITGB1 and ITGA9:ITGB1 interact with SVEP1 (via Sushi domain 21); thereby inhibit Ca(2+) intracellular signaling and as a result repress vasocontraction. ITGA4:ITGB1 and ITGA5:ITGB1 interacts with SELP. Interacts with CD248. ITGA5:ITGB1 interacts with IGFBP1. ITGA4:ITGB1 interacts with BCAM. Interacts with ADGRG6. In terms of assembly, interacts with the C-terminal region of FLNC. Interacts with filamin FLNA isoform 3/VAR-1. Interacts with ACE2. Interacts with alpha-7B in cardiomyocytes of adult heart and alpha-7A and alpha-7B in adult skeletal muscle. Interacts with filamin FLNA isoform 3/VAR-1.

It localises to the cell membrane. It is found in the cell projection. Its subcellular location is the invadopodium membrane. The protein localises to the ruffle membrane. The protein resides in the recycling endosome. It localises to the melanosome. It is found in the lamellipodium. Its subcellular location is the ruffle. The protein localises to the cell junction. The protein resides in the focal adhesion. It localises to the sarcolemma. Integrins alpha-1/beta-1, alpha-2/beta-1, alpha-10/beta-1 and alpha-11/beta-1 are receptors for collagen. Integrins alpha-1/beta-1 and alpha-2/beta-2 recognize the proline-hydroxylated sequence G-F-P-G-E-R in collagen. Integrins alpha-2/beta-1, alpha-3/beta-1, alpha-4/beta-1, alpha-5/beta-1, alpha-8/beta-1, alpha-10/beta-1, alpha-11/beta-1 and alpha-V/beta-1 are receptors for fibronectin. Alpha-4/beta-1 recognizes one or more domains within the alternatively spliced CS-1 and CS-5 regions of fibronectin. Integrin alpha-5/beta-1 is a receptor for fibrinogen. Integrin alpha-1/beta-1, alpha-2/beta-1, alpha-6/beta-1 and alpha-7/beta-1 are receptors for lamimin. Integrin alpha-6/beta-1 (ITGA6:ITGB1) is present in oocytes and is involved in sperm-egg fusion. Integrin alpha-4/beta-1 is a receptor for VCAM1 and recognizes the sequence Q-I-D-S in VCAM1. Integrin alpha-9/beta-1 is a receptor for VCAM1, cytotactin and osteopontin. It recognizes the sequence A-E-I-D-G-I-E-L in cytotactin. Integrin alpha-3/beta-1 is a receptor for epiligrin, thrombospondin and CSPG4. Integrin alpha-3/beta-1 provides a docking site for FAP (seprase) at invadopodia plasma membranes in a collagen-dependent manner and hence may participate in the adhesion, formation of invadopodia and matrix degradation processes, promoting cell invasion. Alpha-3/beta-1 may mediate with LGALS3 the stimulation by CSPG4 of endothelial cells migration. Integrin alpha-V/beta-1 is a receptor for vitronectin. Beta-1 integrins recognize the sequence R-G-D in a wide array of ligands. When associated with alpha-7/beta-1 integrin, regulates cell adhesion and laminin matrix deposition. Involved in promoting endothelial cell motility and angiogenesis. Involved in osteoblast compaction through the fibronectin fibrillogenesis cell-mediated matrix assembly process and the formation of mineralized bone nodules. May be involved in up-regulation of the activity of kinases such as PKC via binding to KRT1. Together with KRT1 and RACK1, serves as a platform for SRC activation or inactivation. Plays a mechanistic adhesive role during telophase, required for the successful completion of cytokinesis. ITGA4:ITGB1 binds to fractalkine (CX3CL1) and may act as its coreceptor in CX3CR1-dependent fractalkine signaling. ITGA4:ITGB1 and ITGA5:ITGB1 bind to PLA2G2A via a site (site 2) which is distinct from the classical ligand-binding site (site 1) and this induces integrin conformational changes and enhanced ligand binding to site 1. ITGA5:ITGB1 acts as a receptor for fibrillin-1 (FBN1) and mediates R-G-D-dependent cell adhesion to FBN1. ITGA5:ITGB1 acts as a receptor for fibronectin FN1 and mediates R-G-D-dependent cell adhesion to FN1. ITGA5:ITGB1 is a receptor for IL1B and binding is essential for IL1B signaling. ITGA5:ITGB3 is a receptor for soluble CD40LG and is required for CD40/CD40LG signaling. Plays an important role in myoblast differentiation and fusion during skeletal myogenesis. ITGA9:ITGB1 may play a crucial role in SVEP1/polydom-mediated myoblast cell adhesion. Integrins ITGA9:ITGB1 and ITGA4:ITGB1 repress PRKCA-mediated L-type voltage-gated channel Ca(2+) influx and ROCK-mediated calcium sensitivity in vascular smooth muscle cells via their interaction with SVEP1, thereby inhibit vasocontraction. The sequence is that of Integrin beta-1 (ITGB1) from Bos taurus (Bovine).